The following is a 164-amino-acid chain: 4-hydroxy-4-methyl-2-oxoglutarate aldolase (164 aa).

Residues 74–77 (GGNL) and arginine 96 contribute to the substrate site. Aspartate 97 is a binding site for a divalent metal cation.

The protein belongs to the class II aldolase/RraA-like family. In terms of assembly, homotrimer. Ni(2+) is required as a cofactor. Requires Co(2+) as cofactor. It depends on Zn(2+) as a cofactor.

It carries out the reaction 4-hydroxy-4-methyl-2-oxoglutarate = 2 pyruvate. It catalyses the reaction oxaloacetate + H(+) = pyruvate + CO2. With respect to regulation, competitively inhibited by oxalate, a pyruvate enolate analog. In terms of biological role, catalyzes the aldol cleavage of 4-hydroxy-4-methyl-2-oxoglutarate (HMG) into 2 molecules of pyruvate. Also contains a secondary oxaloacetate (OAA) decarboxylase activity due to the common pyruvate enolate transition state formed following C-C bond cleavage in the retro-aldol and decarboxylation reactions. In Thermus thermophilus (strain ATCC 27634 / DSM 579 / HB8), this protein is 4-hydroxy-4-methyl-2-oxoglutarate aldolase.